Consider the following 247-residue polypeptide: Probable transcriptional regulatory protein Glov_1245 (247 aa).

This sequence belongs to the TACO1 family.

It is found in the cytoplasm. The chain is Probable transcriptional regulatory protein Glov_1245 from Trichlorobacter lovleyi (strain ATCC BAA-1151 / DSM 17278 / SZ) (Geobacter lovleyi).